We begin with the raw amino-acid sequence, 354 residues long: Endo-1,4-beta-xylanase 1 (354 aa).

Positions 19–339 constitute a GH10 domain; it reads SGLDAAMKAA…KPSYTSSLNT (321 aa). N-linked (GlcNAc...) asparagine glycosylation is present at Asn-117. The active-site Proton donor is the Glu-147. The active-site Nucleophile is the Glu-261. Residues Cys-289 and Cys-295 are joined by a disulfide bond.

The protein belongs to the glycosyl hydrolase 10 (cellulase F) family.

The protein localises to the secreted. It catalyses the reaction Endohydrolysis of (1-&gt;4)-beta-D-xylosidic linkages in xylans.. The protein operates within glycan degradation; xylan degradation. Functionally, endo-1,4-beta-xylanase involved in the hydrolysis of xylan, a major structural heterogeneous polysaccharide found in plant biomass representing the second most abundant polysaccharide in the biosphere, after cellulose. Plays an important role in causing fusarium head blight (FHB) on cereal crops. This Gibberella zeae (strain ATCC MYA-4620 / CBS 123657 / FGSC 9075 / NRRL 31084 / PH-1) (Wheat head blight fungus) protein is Endo-1,4-beta-xylanase 1 (XYL1).